The sequence spans 187 residues: MKTVYVTGYKSFELNIFKDDAPEVYYLKAFIKHKLLQYIDEGLEWVLIQGQLGIELWTAEVVIDLRVEYPDLKLGIITPFYGHTSKWNEQNQMKYNKIAQEADFMESVHHTEYEGPFQFKQTDQFMLDHTDMTILIYDEEQEGSPKFFKRMLVDFINKTNYTCDIVAFDELTDFINDMQWEQDQSFE.

It belongs to the UPF0398 family.

This is UPF0398 protein SH1465 from Staphylococcus haemolyticus (strain JCSC1435).